The following is a 102-amino-acid chain: Small ribosomal subunit protein uS10 (102 aa).

Belongs to the universal ribosomal protein uS10 family. Part of the 30S ribosomal subunit.

Its function is as follows. Involved in the binding of tRNA to the ribosomes. This Desulforamulus reducens (strain ATCC BAA-1160 / DSM 100696 / MI-1) (Desulfotomaculum reducens) protein is Small ribosomal subunit protein uS10.